Reading from the N-terminus, the 335-residue chain is Dipeptide transport ATP-binding protein DppD (335 aa).

Residues 7–256 (VQNLHVSFTT…PQHPYTKGLL (250 aa)) form the ABC transporter domain. Residue 41 to 48 (GESGCGKS) coordinates ATP.

It belongs to the ABC transporter superfamily.

The protein resides in the cell membrane. The enzyme catalyses a dipeptide(out) + ATP + H2O = a dipeptide(in) + ADP + phosphate + H(+). Functionally, probably part of the ABC transporter DppBCDE involved in dipeptide transport. Responsible for energy coupling to the transport system. The chain is Dipeptide transport ATP-binding protein DppD (dppD) from Bacillus subtilis (strain 168).